A 279-amino-acid polypeptide reads, in one-letter code: MSAIIELKKVTFNYHKDQEKPTLDGVSFHVKQGEWLSIIGHNGSGKSTTIRLIDGLLEPESGSIIVDGDLLTITNVWEIRHKIGMVFQNPDNQFVGATVEDDVAFGLENKGIAHEDIKERVNHALELVGMQNFKEKEPARLSGGQKQRVAIAGAVAMKPKIIILDEATSMLDPKGRLELIKTIKNIRDDYQLTVISITHDLDEVALSDRVLVMKDGQVESTSTPEQLFARGDELLQLGLDIPFTTSVVQMLQEEGYPIDYGYLTEKELENQLCQLISKM.

The ABC transporter domain maps to isoleucine 5–aspartate 240. Glycine 40–serine 47 provides a ligand contact to ATP.

It belongs to the ABC transporter superfamily. Energy-coupling factor EcfA family. As to quaternary structure, forms a stable energy-coupling factor (ECF) transporter complex composed of 2 membrane-embedded substrate-binding proteins (S component), 2 ATP-binding proteins (A component) and 2 transmembrane proteins (T component).

Its subcellular location is the cell membrane. Functionally, ATP-binding (A) component of a common energy-coupling factor (ECF) ABC-transporter complex. Unlike classic ABC transporters this ECF transporter provides the energy necessary to transport a number of different substrates. This Streptococcus pyogenes serotype M5 (strain Manfredo) protein is Energy-coupling factor transporter ATP-binding protein EcfA1.